A 235-amino-acid polypeptide reads, in one-letter code: Small ribosomal subunit protein uS2 (235 aa).

This sequence belongs to the universal ribosomal protein uS2 family.

In Geobacillus kaustophilus (strain HTA426), this protein is Small ribosomal subunit protein uS2.